The chain runs to 387 residues: Phosphoglycerate kinase (387 aa).

Substrate-binding positions include 21–23 (DLN), arginine 36, and 59–62 (HLGR). Lysine 84 bears the N6-acetyllysine mark. Substrate contacts are provided by arginine 113 and arginine 146. ATP is bound by residues lysine 197, glutamate 314, and 340–343 (GGDT).

This sequence belongs to the phosphoglycerate kinase family. In terms of assembly, monomer.

The protein resides in the cytoplasm. The catalysed reaction is (2R)-3-phosphoglycerate + ATP = (2R)-3-phospho-glyceroyl phosphate + ADP. Its pathway is carbohydrate degradation; glycolysis; pyruvate from D-glyceraldehyde 3-phosphate: step 2/5. The chain is Phosphoglycerate kinase from Shigella sonnei (strain Ss046).